We begin with the raw amino-acid sequence, 778 residues long: Probable dipeptidyl peptidase 4 (778 aa).

The signal sequence occupies residues 1-18; it reads MKTSQFLSLLLLAGIAQA. Residues N84, N114, and N222 are each glycosylated (N-linked (GlcNAc...) asparagine). Residues S616, D693, and H728 each act as charge relay system in the active site.

This sequence belongs to the peptidase S9B family.

It is found in the secreted. The enzyme catalyses Release of an N-terminal dipeptide, Xaa-Yaa-|-Zaa-, from a polypeptide, preferentially when Yaa is Pro, provided Zaa is neither Pro nor hydroxyproline.. Functionally, extracellular dipeptidyl-peptidase which removes N-terminal dipeptides sequentially from polypeptides having unsubstituted N-termini provided that the penultimate residue is proline. Contributes to pathogenicity. In Arthroderma benhamiae (strain ATCC MYA-4681 / CBS 112371) (Trichophyton mentagrophytes), this protein is Probable dipeptidyl peptidase 4 (DPP4).